The following is a 354-amino-acid chain: Probable L-ascorbate-6-phosphate lactonase UlaG (354 aa).

This sequence belongs to the UlaG family. It depends on a divalent metal cation as a cofactor.

Its subcellular location is the cytoplasm. The enzyme catalyses L-ascorbate 6-phosphate + H2O = 3-dehydro-L-gulonate 6-phosphate. Its pathway is cofactor degradation; L-ascorbate degradation; D-xylulose 5-phosphate from L-ascorbate: step 1/4. Its function is as follows. Probably catalyzes the hydrolysis of L-ascorbate-6-P into 3-keto-L-gulonate-6-P. Is essential for L-ascorbate utilization under anaerobic conditions. The chain is Probable L-ascorbate-6-phosphate lactonase UlaG from Shigella boydii serotype 4 (strain Sb227).